Reading from the N-terminus, the 513-residue chain is V-type proton ATPase subunit B, kidney isoform (513 aa).

Positions 1–18 (MATTVDSRSSGFTGNSCD) are enriched in polar residues. The tract at residues 1 to 21 (MATTVDSRSSGFTGNSCDPGT) is disordered. An ATP-binding site is contributed by arginine 394. The PDZ-binding motif lies at 510-513 (DTAL).

It belongs to the ATPase alpha/beta chains family. V-ATPase is a heteromultimeric enzyme made up of two complexes: the ATP-hydrolytic V1 complex and the proton translocation V0 complex. The V1 complex consists of three catalytic AB heterodimers that form a heterohexamer, three peripheral stalks each consisting of EG heterodimers, one central rotor including subunits D and F, and the regulatory subunits C and H. The proton translocation complex V0 consists of the proton transport subunit a, a ring of proteolipid subunits c9c'', rotary subunit d, subunits e and f, and the accessory subunits ATP6AP1/Ac45 and ATP6AP2/PRR. Forms a complex with NHERF1 and SCL4A7. In terms of tissue distribution, highly expressed in the kidney; found in early distal nephron, encompassing thick ascending limbs and distal convoluted tubules and in the alpha-intercalated cells of the cortical collecting ducts (at protein level). Expressed in the olfactory epithelium (at protein level). Expressed at lower levels in the testis.

It localises to the apical cell membrane. It is found in the basolateral cell membrane. Non-catalytic subunit of the V1 complex of vacuolar(H+)-ATPase (V-ATPase), a multisubunit enzyme composed of a peripheral complex (V1) that hydrolyzes ATP and a membrane integral complex (V0) that translocates protons. V-ATPase is responsible for acidifying and maintaining the pH of intracellular compartments and in some cell types, is targeted to the plasma membrane, where it is responsible for acidifying the extracellular environment. Essential for the proper assembly and activity of V-ATPase. In renal intercalated cells, mediates secretion of protons (H+) into the urine thereby ensuring correct urinary acidification. Required for optimal olfactory function by mediating the acidification of the nasal olfactory epithelium. In Mus musculus (Mouse), this protein is V-type proton ATPase subunit B, kidney isoform (Atp6v1b1).